The chain runs to 124 residues: Fluoride-specific ion channel FluC (124 aa).

4 helical membrane-spanning segments follow: residues 5–27, 42–62, 63–83, and 95–115; these read LFVA…LMLQ, ILGS…EVSP, EIKA…STFS, and LVKA…VVYL. Na(+) contacts are provided by Gly74 and Thr77.

The protein belongs to the fluoride channel Fluc/FEX (TC 1.A.43) family.

The protein localises to the cell inner membrane. It carries out the reaction fluoride(in) = fluoride(out). With respect to regulation, na(+) is not transported, but it plays an essential structural role and its presence is essential for fluoride channel function. Its function is as follows. Fluoride-specific ion channel. Important for reducing fluoride concentration in the cell, thus reducing its toxicity. The protein is Fluoride-specific ion channel FluC of Shewanella piezotolerans (strain WP3 / JCM 13877).